A 506-amino-acid chain; its full sequence is 2,3-bisphosphoglycerate-independent phosphoglycerate mutase (506 aa).

Residues Asp-13 and Ser-63 each coordinate Mn(2+). Catalysis depends on Ser-63, which acts as the Phosphoserine intermediate. Substrate-binding positions include His-124, 153–154 (RD), Arg-183, Arg-189, 254–257 (RADR), and Lys-330. Mn(2+) contacts are provided by Asp-396, His-400, Asp-437, His-438, and His-456.

This sequence belongs to the BPG-independent phosphoglycerate mutase family. As to quaternary structure, monomer. Requires Mn(2+) as cofactor.

It catalyses the reaction (2R)-2-phosphoglycerate = (2R)-3-phosphoglycerate. It participates in carbohydrate degradation; glycolysis; pyruvate from D-glyceraldehyde 3-phosphate: step 3/5. In terms of biological role, catalyzes the interconversion of 2-phosphoglycerate and 3-phosphoglycerate. This is 2,3-bisphosphoglycerate-independent phosphoglycerate mutase from Cereibacter sphaeroides (strain ATCC 17029 / ATH 2.4.9) (Rhodobacter sphaeroides).